The primary structure comprises 647 residues: Threonine--tRNA ligase (647 aa).

In terms of domain architecture, TGS spans 1 to 61 (MIKITFPDGA…EEDGSIEIVT (61 aa)). The tract at residues 240–538 (DHRKLGKELD…LIETYKGAFP (299 aa)) is catalytic. Positions 334, 385, and 515 each coordinate Zn(2+).

It belongs to the class-II aminoacyl-tRNA synthetase family. Homodimer. The cofactor is Zn(2+).

The protein resides in the cytoplasm. The catalysed reaction is tRNA(Thr) + L-threonine + ATP = L-threonyl-tRNA(Thr) + AMP + diphosphate + H(+). Functionally, catalyzes the attachment of threonine to tRNA(Thr) in a two-step reaction: L-threonine is first activated by ATP to form Thr-AMP and then transferred to the acceptor end of tRNA(Thr). Also edits incorrectly charged L-seryl-tRNA(Thr). This is Threonine--tRNA ligase from Streptococcus pyogenes serotype M28 (strain MGAS6180).